Reading from the N-terminus, the 318-residue chain is tRNA dimethylallyltransferase (318 aa).

Residue 16 to 23 coordinates ATP; the sequence is GPTASGKS. Residue 18–23 participates in substrate binding; that stretch reads TASGKS. Interaction with substrate tRNA regions lie at residues 41–44 and 165–169; these read DSRQ and QRLIR.

This sequence belongs to the IPP transferase family. Monomer. Mg(2+) is required as a cofactor.

It carries out the reaction adenosine(37) in tRNA + dimethylallyl diphosphate = N(6)-dimethylallyladenosine(37) in tRNA + diphosphate. In terms of biological role, catalyzes the transfer of a dimethylallyl group onto the adenine at position 37 in tRNAs that read codons beginning with uridine, leading to the formation of N6-(dimethylallyl)adenosine (i(6)A). This is tRNA dimethylallyltransferase from Pelodictyon phaeoclathratiforme (strain DSM 5477 / BU-1).